Reading from the N-terminus, the 300-residue chain is MNLEVEIAGIKLKNPVIAASGTFGFGREYSKLIDISEFGAICTKGITLKKRIGNPQPRLCEVYAGIINSVGLENPGVEAFINDELPFLKSFDTKIIANINGFSKEEFVELTKILTSLVDMIEVNLSCPNVKEGGMVFGKDPKKVYEITKSVKDVASCPIIVKLTPNVTDITQLAVAAENAGADAISLINTVSAMAIDIETRKPLIKMVTGGLSGPAIKPIAVRMVYECFKKVRIPIIGMGGIMNYKDAIEFFIAGATAIQIGTVNFINPKAVCEIKEGIEAYLERKGFKSIKELVGSINI.

Residues Ser20 and 44 to 45 contribute to the FMN site; that span reads KG. Substrate-binding positions include Lys44 and 68-72; that span reads NSVGL. Residues Asn98 and Asn124 each contribute to the FMN site. Asn124 serves as a coordination point for substrate. The Nucleophile role is filled by Cys127. Lys162 and Ile188 together coordinate FMN. 189 to 190 contributes to the substrate binding site; it reads NT. Residues Gly214, 240 to 241, and 262 to 263 contribute to the FMN site; these read GG and GT.

Belongs to the dihydroorotate dehydrogenase family. Type 1 subfamily. As to quaternary structure, heterotetramer of 2 PyrK and 2 PyrD type B subunits. It depends on FMN as a cofactor.

The protein localises to the cytoplasm. The catalysed reaction is (S)-dihydroorotate + NAD(+) = orotate + NADH + H(+). Its pathway is pyrimidine metabolism; UMP biosynthesis via de novo pathway; orotate from (S)-dihydroorotate (NAD(+) route): step 1/1. Catalyzes the conversion of dihydroorotate to orotate with NAD(+) as electron acceptor. The polypeptide is Dihydroorotate dehydrogenase B (NAD(+)), catalytic subunit (pyrD) (Caldicellulosiruptor bescii (strain ATCC BAA-1888 / DSM 6725 / KCTC 15123 / Z-1320) (Anaerocellum thermophilum)).